The chain runs to 358 residues: Heat-inducible transcription repressor HrcA (358 aa).

Belongs to the HrcA family.

Negative regulator of class I heat shock genes (grpE-dnaK-dnaJ and groELS operons). Prevents heat-shock induction of these operons. In Caulobacter vibrioides (strain NA1000 / CB15N) (Caulobacter crescentus), this protein is Heat-inducible transcription repressor HrcA.